We begin with the raw amino-acid sequence, 186 residues long: TATA-box-binding protein (186 aa).

Repeat copies occupy residues 10-86 (IENV…FDKL) and 101-179 (VQNI…VERL).

Belongs to the TBP family.

Its function is as follows. General factor that plays a role in the activation of archaeal genes transcribed by RNA polymerase. Binds specifically to the TATA box promoter element which lies close to the position of transcription initiation. This Haloarcula marismortui (strain ATCC 43049 / DSM 3752 / JCM 8966 / VKM B-1809) (Halobacterium marismortui) protein is TATA-box-binding protein.